A 301-amino-acid chain; its full sequence is 2-phosphoglycerate kinase (301 aa).

In terms of domain architecture, ATP-cone spans 2-89 (IRVIEKGDKV…FWRRFRKMKV (88 aa)).

The protein belongs to the 2-phosphoglycerate kinase family. A divalent metal cation is required as a cofactor.

The catalysed reaction is (2R)-2-phosphoglycerate + ATP = (2R)-2,3-bisphosphoglycerate + ADP + H(+). Its pathway is thermoadapter biosynthesis; cyclic 2,3-diphosphoglycerate biosynthesis; cyclic 2,3-diphosphoglycerate from 2-phospho-D-glycerate: step 1/2. Catalyzes the phosphorylation of 2-phosphoglycerate to 2,3-diphosphoglycerate. Involved in the biosynthesis of cyclic 2,3-bisphosphoglycerate, a thermoprotectant. The polypeptide is 2-phosphoglycerate kinase (Pyrococcus horikoshii (strain ATCC 700860 / DSM 12428 / JCM 9974 / NBRC 100139 / OT-3)).